Consider the following 504-residue polypeptide: Maturase K (504 aa).

This sequence belongs to the intron maturase 2 family. MatK subfamily.

Its subcellular location is the plastid. It localises to the chloroplast. Usually encoded in the trnK tRNA gene intron. Probably assists in splicing its own and other chloroplast group II introns. The protein is Maturase K of Betula papyrifera (Paper birch).